Consider the following 235-residue polypeptide: Elongation factor Tu, chloroplastic (235 aa).

The 125-residue stretch at 1–125 folds into the tr-type G domain; it reads KNMITGAAQM…KVDSYIPTPQ (125 aa). 47–50 provides a ligand contact to GTP; the sequence is NKED.

This sequence belongs to the TRAFAC class translation factor GTPase superfamily. Classic translation factor GTPase family. EF-Tu/EF-1A subfamily.

It localises to the plastid. Its subcellular location is the chloroplast. The enzyme catalyses GTP + H2O = GDP + phosphate + H(+). Its function is as follows. GTP hydrolase that promotes the GTP-dependent binding of aminoacyl-tRNA to the A-site of ribosomes during protein biosynthesis. In Gonium pectorale (Green alga), this protein is Elongation factor Tu, chloroplastic (tufA).